Reading from the N-terminus, the 492-residue chain is Probable serine/threonine-protein kinase WNK9 (492 aa).

A Protein kinase domain is found at 25–282 (GRYNEVLGKG…ACELLDDHFL (258 aa)). Residues 105–108 (TEMF) and K155 each bind ATP. The Proton acceptor role is filled by D172.

This sequence belongs to the protein kinase superfamily. Ser/Thr protein kinase family. WNK subfamily.

It catalyses the reaction L-seryl-[protein] + ATP = O-phospho-L-seryl-[protein] + ADP + H(+). The enzyme catalyses L-threonyl-[protein] + ATP = O-phospho-L-threonyl-[protein] + ADP + H(+). Its function is as follows. May regulate flowering time by modulating the photoperiod pathway. This Arabidopsis thaliana (Mouse-ear cress) protein is Probable serine/threonine-protein kinase WNK9 (WNK9).